Reading from the N-terminus, the 257-residue chain is 4-hydroxy-tetrahydrodipicolinate reductase (257 aa).

NAD(+) contacts are provided by residues 8-13 (GSTGRV), 90-92 (ATT), and 114-117 (ATNM). The active-site Proton donor/acceptor is H146. H147 contacts (S)-2,3,4,5-tetrahydrodipicolinate. K150 serves as the catalytic Proton donor. 156–157 (GT) contacts (S)-2,3,4,5-tetrahydrodipicolinate.

It belongs to the DapB family.

Its subcellular location is the cytoplasm. The enzyme catalyses (S)-2,3,4,5-tetrahydrodipicolinate + NAD(+) + H2O = (2S,4S)-4-hydroxy-2,3,4,5-tetrahydrodipicolinate + NADH + H(+). It carries out the reaction (S)-2,3,4,5-tetrahydrodipicolinate + NADP(+) + H2O = (2S,4S)-4-hydroxy-2,3,4,5-tetrahydrodipicolinate + NADPH + H(+). The protein operates within amino-acid biosynthesis; L-lysine biosynthesis via DAP pathway; (S)-tetrahydrodipicolinate from L-aspartate: step 4/4. Catalyzes the conversion of 4-hydroxy-tetrahydrodipicolinate (HTPA) to tetrahydrodipicolinate. The sequence is that of 4-hydroxy-tetrahydrodipicolinate reductase from Aliarcobacter butzleri (strain RM4018) (Arcobacter butzleri).